We begin with the raw amino-acid sequence, 447 residues long: Methionine aminopeptidase 2 (447 aa).

Residues 1–86 (MAGATEGEDT…KNKKKKKKKI (86 aa)) are disordered. Basic and acidic residues predominate over residues 8–32 (EDTKVIESKINELNIDKPKLEDNNE). Over residues 43-60 (GGDDDDDKEDDDDNDEIT) the composition is skewed to acidic residues. Positions 71–86 (KKKKKNKNKKKKKKKI) are enriched in basic residues. His198 contributes to the substrate binding site. A divalent metal cation is bound by residues Asp218, Asp229, and His300. His308 is a binding site for substrate. Positions 333 and 428 each coordinate a divalent metal cation.

It belongs to the peptidase M24A family. Methionine aminopeptidase eukaryotic type 2 subfamily. It depends on Co(2+) as a cofactor. Zn(2+) serves as cofactor. Requires Mn(2+) as cofactor. Fe(2+) is required as a cofactor.

It localises to the cytoplasm. The enzyme catalyses Release of N-terminal amino acids, preferentially methionine, from peptides and arylamides.. Functionally, cotranslationally removes the N-terminal methionine from nascent proteins. The N-terminal methionine is often cleaved when the second residue in the primary sequence is small and uncharged (Met-Ala-, Cys, Gly, Pro, Ser, Thr, or Val). The protein is Methionine aminopeptidase 2 of Candida albicans (strain WO-1) (Yeast).